A 265-amino-acid chain; its full sequence is Glutamate racemase (265 aa).

Residues 10 to 11 (DS) and 42 to 43 (YG) contribute to the substrate site. Cysteine 73 acts as the Proton donor/acceptor in catalysis. A substrate-binding site is contributed by 74-75 (NT). Catalysis depends on cysteine 183, which acts as the Proton donor/acceptor. 184 to 185 (TH) is a binding site for substrate.

This sequence belongs to the aspartate/glutamate racemases family.

The enzyme catalyses L-glutamate = D-glutamate. Its pathway is cell wall biogenesis; peptidoglycan biosynthesis. Its function is as follows. Provides the (R)-glutamate required for cell wall biosynthesis. The sequence is that of Glutamate racemase from Corynebacterium diphtheriae (strain ATCC 700971 / NCTC 13129 / Biotype gravis).